A 585-amino-acid polypeptide reads, in one-letter code: uncharacterized protein (585 aa).

The next 6 membrane-spanning stretches (helical) occupy residues 18–38, 55–75, 128–148, 150–170, 238–258, and 276–296; these read FMWS…YPII, AAWV…ATFF, FFLS…AISL, VMFY…PFLA, IWSA…VALL, and VAFF…GFVI. The ABC transmembrane type-1 domain maps to 18-301; it reads FMWSLLAMLL…LGFVINMFSQ (284 aa). The 236-residue stretch at 335 to 570 folds into the ABC transporter domain; that stretch reads VHFKNVSLAY…GGYYKKIYDL (236 aa). 369–376 provides a ligand contact to ATP; the sequence is GPTGSGKS.

This sequence belongs to the ABC transporter superfamily.

It is found in the cell membrane. This is an uncharacterized protein from Bacillus subtilis (strain 168).